The chain runs to 231 residues: Ribose-5-phosphate isomerase A (231 aa).

Substrate is bound by residues 28 to 31 (TGST), 83 to 86 (DGAD), and 96 to 99 (KGGG). Glutamate 105 (proton acceptor) is an active-site residue. Lysine 123 lines the substrate pocket.

This sequence belongs to the ribose 5-phosphate isomerase family. In terms of assembly, homodimer.

The enzyme catalyses aldehydo-D-ribose 5-phosphate = D-ribulose 5-phosphate. It functions in the pathway carbohydrate degradation; pentose phosphate pathway; D-ribose 5-phosphate from D-ribulose 5-phosphate (non-oxidative stage): step 1/1. Functionally, catalyzes the reversible conversion of ribose-5-phosphate to ribulose 5-phosphate. This is Ribose-5-phosphate isomerase A from Sinorhizobium fredii (strain NBRC 101917 / NGR234).